The primary structure comprises 586 residues: Glutathione S-transferase C-terminal domain-containing protein homolog (586 aa).

In terms of domain architecture, GST C-terminal spans 121–276 (LGFKESCLLA…GTCAKILGDL (156 aa)).

The protein belongs to the GSTCD family.

The protein is Glutathione S-transferase C-terminal domain-containing protein homolog of Drosophila pseudoobscura pseudoobscura (Fruit fly).